The sequence spans 420 residues: Exodeoxyribonuclease 7 large subunit (420 aa).

The protein belongs to the XseA family. Heterooligomer composed of large and small subunits.

The protein resides in the cytoplasm. It catalyses the reaction Exonucleolytic cleavage in either 5'- to 3'- or 3'- to 5'-direction to yield nucleoside 5'-phosphates.. Bidirectionally degrades single-stranded DNA into large acid-insoluble oligonucleotides, which are then degraded further into small acid-soluble oligonucleotides. The chain is Exodeoxyribonuclease 7 large subunit from Helicobacter pylori (strain G27).